The sequence spans 481 residues: MTVRVRIAPSPTGNLHIGTARTAVFNWLFARHHGGKFILRIEDTDLERSRPEYTDNILEGLRWLGLNWDEGPFFQSQRLDLYKEAVQKLLDQGLAYRCYTTSEELEALREAQKARGEAPRYDNRHRNLTPEQRAAYEAEGRSYVIRFKIEDGREIVWNDLVRGKMSWRGSDLGGDMVIARASEEGSGQPLYNFVVVVDDIDMQITHVIRGEDHIANTAKQILLYEAMGAKIPEFSHTPLILNMEGRKLSKRDGVTSISEFQKMGFTAEGLVNYMTLLGWSPPDSTQEIFTLETAAKEFGFERVNKAGAKFDWDKLDWLNSQYIHNTPVDKLTDLLIPFWEAAGYKFDGGRDRAWLEQLVTLISQSLTRLVDAVPQSQLFFSDTVEFSEEGSTQLKQEGSTAVLEAIVTALENQPQLSEAAAQDIIKQVVKEQKVKKGLVMRSLRAALTGDVHGPDLIQSWLLLNQIGLDKSRLSRAITEAN.

The short motif at 9 to 19 (PSPTGNLHIGT) is the 'HIGH' region element. The short motif at 247 to 251 (KLSKR) is the 'KMSKS' region element. Lys250 provides a ligand contact to ATP.

Belongs to the class-I aminoacyl-tRNA synthetase family. Glutamate--tRNA ligase type 1 subfamily. Monomer.

Its subcellular location is the cytoplasm. The enzyme catalyses tRNA(Glu) + L-glutamate + ATP = L-glutamyl-tRNA(Glu) + AMP + diphosphate. Functionally, catalyzes the attachment of glutamate to tRNA(Glu) in a two-step reaction: glutamate is first activated by ATP to form Glu-AMP and then transferred to the acceptor end of tRNA(Glu). In Nostoc punctiforme (strain ATCC 29133 / PCC 73102), this protein is Glutamate--tRNA ligase.